The chain runs to 336 residues: Peroxidase 11 (336 aa).

An N-terminal signal peptide occupies residues 1–20; it reads MMRLLFVFFMVHTIFIPCFS. 4 disulfides stabilise this stretch: Cys39-Cys119, Cys72-Cys77, Cys125-Cys331, and Cys204-Cys236. Catalysis depends on His70, which acts as the Proton acceptor. Positions 71, 74, 76, 78, and 80 each coordinate Ca(2+). Substrate is bound at residue Pro167. His197 serves as a coordination point for heme b. A Ca(2+)-binding site is contributed by Thr198. N-linked (GlcNAc...) asparagine glycosylation occurs at Asn246. Asp251, Thr254, and Asp259 together coordinate Ca(2+).

It belongs to the peroxidase family. Classical plant (class III) peroxidase subfamily. It depends on heme b as a cofactor. Ca(2+) is required as a cofactor. As to expression, expressed in roots and stems.

It localises to the secreted. It catalyses the reaction 2 a phenolic donor + H2O2 = 2 a phenolic radical donor + 2 H2O. Its function is as follows. Removal of H(2)O(2), oxidation of toxic reductants, biosynthesis and degradation of lignin, suberization, auxin catabolism, response to environmental stresses such as wounding, pathogen attack and oxidative stress. These functions might be dependent on each isozyme/isoform in each plant tissue. In Arabidopsis thaliana (Mouse-ear cress), this protein is Peroxidase 11 (PER11).